The chain runs to 327 residues: Pyruvate dehydrogenase E1 component subunit beta (327 aa).

Residue glutamate 63 coordinates thiamine diphosphate.

Heterodimer of an alpha and a beta chain. Thiamine diphosphate is required as a cofactor.

The catalysed reaction is N(6)-[(R)-lipoyl]-L-lysyl-[protein] + pyruvate + H(+) = N(6)-[(R)-S(8)-acetyldihydrolipoyl]-L-lysyl-[protein] + CO2. Functionally, the pyruvate dehydrogenase complex catalyzes the overall conversion of pyruvate to acetyl-CoA and CO(2). It contains multiple copies of three enzymatic components: pyruvate dehydrogenase (E1), dihydrolipoamide acetyltransferase (E2) and lipoamide dehydrogenase (E3). This is Pyruvate dehydrogenase E1 component subunit beta (pdhB) from Mycoplasma pneumoniae (strain ATCC 29342 / M129 / Subtype 1) (Mycoplasmoides pneumoniae).